Here is a 907-residue protein sequence, read N- to C-terminus: Catenin alpha-1 (907 aa).

A compositionally biased stretch (basic and acidic residues) spans 870–879 (VKREKLDDGQ). The disordered stretch occupies residues 870-895 (VKREKLDDGQTNKVKRSSQKKHINPV). Residues 882-892 (KVKRSSQKKHI) are compositionally biased toward basic residues.

It belongs to the vinculin/alpha-catenin family. As to quaternary structure, interacts with ctnnb1, jupa and cdh2. Interacts with cdh1 during early stages of oogenesis, interaction is no longer present when oocyte develops into the unfertilized egg. Expressed in the skin (at protein level). Expressed in the ovary.

It is found in the cell junction. It localises to the adherens junction. The protein resides in the cytoplasm. The protein localises to the cytoskeleton. Its subcellular location is the cell membrane. It is found in the nucleus. Its function is as follows. Associates with the cytoplasmic domain of a variety of cadherins, forming catenin and cadherin complexes which are further linked to the actin filament network and is thereby involved in cell-cell adhesion. Required for embryonic development, via maintenance of adherens junctions that facilitate the maintenance of the epithelial barrier. This Danio rerio (Zebrafish) protein is Catenin alpha-1.